Here is a 548-residue protein sequence, read N- to C-terminus: MSSLSTLRILHSTAGRRWASYYGIYPKSAACSSSSVAIARFFSTAADRPPKHAMLSVENKVVAPPMVYIAGEEMTRYACDLVVKSWLEPYFDLSQWEYFDLSCVNRDNTNDQVLRDAVTAGQRIGAIFKEPTITPSAIQKKAFGLKNSLGSPNGAMRAGWNGITISRDTIHIDGIELGYKRPVFFERHAVGGEYGAGWSKVGRGTLLTTYLPSDGRDPFVVDKRDLTDQHNVVVTYHNPYDNVEPLAHLFFQRCLDANITPYVVTKKTVFKWQEGFWAVMKDVFDEHYKSRFEEKGLLQACGGDLQHLISDAATMQLIRWTDGGFGMAAHNYDGDMLTDQIAQVHRSPGFITSNLVGKAPDGSLIKEFEASHGTVSDLWNDHLAGKETSLNPLGLVEAIVGALQHAAVLDAEKNPDDEHKVKARDQIFNFTTTLRTAMHNTFRYGQGTRDMSGPSGYTTEDFVRKVAWRLQRYLDAQYDEAPPPQLGEPSRKLRRNYDIDEEAINGLFQKYDKNGDGFIDFEEFTRMLVKMNLAPLLTKKEKEKKPDV.

A mitochondrion-targeting transit peptide spans 1-53 (MSSLSTLRILHSTAGRRWASYYGIYPKSAACSSSSVAIARFFSTAADRPPKHA). Residues 132–134 (TIT) and Asn153 each bind NAD(+). D-threo-isocitrate-binding positions include 151-157 (SPNGAMR), Arg187, Tyr194, Lys266, Asp311, and Asp335. Residues Asp311, Asp335, and Asp339 each coordinate Mg(2+). NAD(+) is bound by residues 372–377 (HGTVSD) and Asn391. One can recognise an EF-hand domain in the interval 499–534 (IDEEAINGLFQKYDKNGDGFIDFEEFTRMLVKMNLA). Asp512, Asn514, Asp516, Phe518, and Glu523 together coordinate Ca(2+).

The protein belongs to the isocitrate and isopropylmalate dehydrogenases family. As to quaternary structure, homodimer. Mg(2+) is required as a cofactor. The cofactor is Mn(2+).

It localises to the mitochondrion. It carries out the reaction D-threo-isocitrate + NAD(+) = 2-oxoglutarate + CO2 + NADH. Its activity is regulated as follows. The homodimer exhibits allosteric regulation by isocitrate. Activated by Mn(2+) and Mg(2+). No activation by Na(+), K(+) or Li(+). Inhibited by Co(2+), Cu(2+) and Ni(2+), but not with Ca(2+) in the presence of Mn(2+) or Mg(2+). Competitively inhibited by NADH, but no effect on activity by 1.0 mM citrate. Strongly inhibited by excess ATP, ADP, AMP and alpha-ketoglutarate. Its function is as follows. Performs an essential role in the oxidative function of the tricarboxylic acid cycle and respiration. Catalyzes the decarboxylation of isocitrate to produce 2-oxoglutarate and generate NADH to provide electrons for energy production. No activity with NADP(+). The chain is Isocitrate dehydrogenase [NAD(+)] 1, mitochondrial from Phaeodactylum tricornutum (strain CCAP 1055/1).